A 303-amino-acid chain; its full sequence is ATP phosphoribosyltransferase (303 aa).

Belongs to the ATP phosphoribosyltransferase family. Long subfamily. Mg(2+) is required as a cofactor.

It localises to the cytoplasm. It carries out the reaction 1-(5-phospho-beta-D-ribosyl)-ATP + diphosphate = 5-phospho-alpha-D-ribose 1-diphosphate + ATP. It functions in the pathway amino-acid biosynthesis; L-histidine biosynthesis; L-histidine from 5-phospho-alpha-D-ribose 1-diphosphate: step 1/9. Feedback inhibited by histidine. Its function is as follows. Catalyzes the condensation of ATP and 5-phosphoribose 1-diphosphate to form N'-(5'-phosphoribosyl)-ATP (PR-ATP). Has a crucial role in the pathway because the rate of histidine biosynthesis seems to be controlled primarily by regulation of HisG enzymatic activity. The protein is ATP phosphoribosyltransferase of Haemophilus influenzae (strain PittGG).